The chain runs to 131 residues: Small ribosomal subunit protein bS18 (131 aa).

A compositionally biased stretch (polar residues) spans M1–A10. Residues M1–G60 are disordered. The span at S17–R27 shows a compositional bias: gly residues. Residues G28–R44 show a composition bias toward basic and acidic residues.

The protein belongs to the bacterial ribosomal protein bS18 family. In terms of assembly, part of the 30S ribosomal subunit. Forms a tight heterodimer with protein bS6.

Its function is as follows. Binds as a heterodimer with protein bS6 to the central domain of the 16S rRNA, where it helps stabilize the platform of the 30S subunit. This is Small ribosomal subunit protein bS18 from Myxococcus xanthus (strain DK1622).